A 549-amino-acid chain; its full sequence is MKRVLTALAAALPFAAHAADAISGAVERQPTNWQAIIMFLIFVVFTLGITYWASKRVRSRSDYYTAGGNITGFQNGLAIAGDYMSAASFLGISALVFTSGYDGLIYSLGFLVGWPIILFLIAERLRNLGRYTFADVASYRLKQGPIRILSACGSLVVVALYLIAQMVGAGKLIELLFGLNYHIAVVLVGVLMMMYVLFGGMLATTWVQIIKAVLLLFGASFMAFMVMKHVGFSFNNLFTEAMAVHPKGTAIMSPGGLVQDPISALSLGLGLMFGTAGLPHILMRFFTVSDAREARKSVFYATGFMGYFYILTFIIGFGAIMLVGANPAYKDAAGALIGGNNMAAVHLANAVGGNLFLGFISAVAFATILAVVAGLTLAGASAVSHDLYANVFRKGATEREELKVSKITVLVLGVIAIILGVLFENQNIAFMVGLAFAIAASCNFPIILLSMYWSKLTTRGAMLGGWLGLLTAVVLMILGPTIWVQILGHEKAIFPYEYPALFSISVAFLGIWFFSATDNSAEGNREREQFRAQFIRSQTGFGVEQGRAH.

13 consecutive transmembrane segments (helical) span residues Trp33–Ala53, Leu77–Phe97, Gly103–Glu123, Ile148–Gly168, Ile183–Ala203, Trp206–Val226, Ile262–Leu282, Gly303–Val323, Leu355–Leu375, Val404–Glu424, Ile428–Leu448, Gly464–Val484, and Ile493–Phe513.

The protein belongs to the sodium:solute symporter (SSF) (TC 2.A.21) family.

The protein resides in the cell inner membrane. Transports acetate. This is Cation/acetate symporter ActP from Salmonella arizonae (strain ATCC BAA-731 / CDC346-86 / RSK2980).